The following is a 240-amino-acid chain: Mitochondrial transcription rescue factor 1 (240 aa).

Residues 1-83 (MAVPGVRLLT…ECYFPFSIRL (83 aa)) constitute a mitochondrion transit peptide. The interval 92 to 127 (STKKTLQKEADEEDSDEETSYPERSEQEEELESEPG) is disordered. Over residues 101 to 124 (ADEEDSDEETSYPERSEQEEELES) the composition is skewed to acidic residues. S106 and S116 each carry phosphoserine. Positions 142–217 (FRYDVILKTG…LKKVYEEKTE (76 aa)) constitute an S4 RNA-binding domain.

Monomer. Interacts with POLRMT. Interacts (via S4 domain) with MTRFR (via C-terminus). Associates with mitoribosomal S39 large subunit, peptidyl tRNA and nascent chain.

It localises to the mitochondrion matrix. Its function is as follows. Mitochondrial RNA-binding protein involved in mitochondrial transcription regulation. Functions as a protective factor to maintain proper mitochondrial RNA level during stress. Acts at the transcription level and its protective function depends on its RNA binding ability. Part of a mitoribosome-associated quality control pathway that prevents aberrant translation by responding to interruptions during elongation. As heterodimer with MTRF, ejects the unfinished nascent chain and peptidyl transfer RNA (tRNA), respectively, from stalled ribosomes. Recruitment of mitoribosome biogenesis factors to these quality control intermediates suggests additional roles for MTRES1 and MTRF during mitoribosome rescue. The polypeptide is Mitochondrial transcription rescue factor 1 (Mtres1) (Mus musculus (Mouse)).